The chain runs to 150 residues: Cytochrome c oxidase subunit 5A, mitochondrial (150 aa).

The N-terminal 41 residues, 1–41, are a transit peptide targeting the mitochondrion; it reads MLGAALRRCAVAATTRADPRGLLHSARTPGPAVAIQSVRCY. The short motif at 2 to 17 is the SIFI-degron element; it reads LGAALRRCAVAATTRA. Residues Lys87 and Lys113 each carry the N6-acetyllysine modification. A Phosphothreonine modification is found at Thr141.

The protein belongs to the cytochrome c oxidase subunit 5A family. In terms of assembly, component of the cytochrome c oxidase (complex IV, CIV), a multisubunit enzyme composed of 14 subunits. The complex is composed of a catalytic core of 3 subunits MT-CO1, MT-CO2 and MT-CO3, encoded in the mitochondrial DNA, and 11 supernumerary subunits COX4I1 (or COX4I2), COX5A, COX5B, COX6A1 (or COX6A2), COX6B1 (or COX6B2), COX6C, COX7A2 (or COX7A1), COX7B, COX7C, COX8A and NDUFA4, which are encoded in the nuclear genome. The complex exists as a monomer or a dimer and forms supercomplexes (SCs) in the inner mitochondrial membrane with NADH-ubiquinone oxidoreductase (complex I, CI) and ubiquinol-cytochrome c oxidoreductase (cytochrome b-c1 complex, complex III, CIII), resulting in different assemblies (supercomplex SCI(1)III(2)IV(1) and megacomplex MCI(2)III(2)IV(2)). Interacts with AFG1L. Interacts with RAB5IF. Post-translationally, in response to mitochondrial stress, the precursor protein is ubiquitinated by the SIFI complex in the cytoplasm before mitochondrial import, leading to its degradation. Within the SIFI complex, UBR4 initiates ubiquitin chain that are further elongated or branched by KCMF1.

It is found in the mitochondrion inner membrane. It participates in energy metabolism; oxidative phosphorylation. Functionally, component of the cytochrome c oxidase, the last enzyme in the mitochondrial electron transport chain which drives oxidative phosphorylation. The respiratory chain contains 3 multisubunit complexes succinate dehydrogenase (complex II, CII), ubiquinol-cytochrome c oxidoreductase (cytochrome b-c1 complex, complex III, CIII) and cytochrome c oxidase (complex IV, CIV), that cooperate to transfer electrons derived from NADH and succinate to molecular oxygen, creating an electrochemical gradient over the inner membrane that drives transmembrane transport and the ATP synthase. Cytochrome c oxidase is the component of the respiratory chain that catalyzes the reduction of oxygen to water. Electrons originating from reduced cytochrome c in the intermembrane space (IMS) are transferred via the dinuclear copper A center (CU(A)) of subunit 2 and heme A of subunit 1 to the active site in subunit 1, a binuclear center (BNC) formed by heme A3 and copper B (CU(B)). The BNC reduces molecular oxygen to 2 water molecules using 4 electrons from cytochrome c in the IMS and 4 protons from the mitochondrial matrix. The chain is Cytochrome c oxidase subunit 5A, mitochondrial (COX5A) from Homo sapiens (Human).